The following is a 176-amino-acid chain: MVSMEEKIKACVLQALESAAGTKGEGVYLVSVRVKGAGKQTKIEILLDSDTGIRIDQCSFFSRRIRELLENEGGTPVLDGEDFDLMVSSPGLGEPLLMPRQYLRHTGRLLRVIWKDEQQSEKTVTGRLQQVLKTEGEITAVRLVPVKTGKKSAGNVQEPIELMLDCIVRAVPEAEL.

This sequence belongs to the RimP family.

It localises to the cytoplasm. Functionally, required for maturation of 30S ribosomal subunits. The sequence is that of Ribosome maturation factor RimP from Chlorobium limicola (strain DSM 245 / NBRC 103803 / 6330).